The following is a 132-amino-acid chain: Glycine cleavage system H protein (132 aa).

The Lipoyl-binding domain maps to 24-106 (LVRIGISAFA…HGEGWLLVVR (83 aa)). Lys-65 is subject to N6-lipoyllysine.

This sequence belongs to the GcvH family. The glycine cleavage system is composed of four proteins: P, T, L and H. Requires (R)-lipoate as cofactor.

The glycine cleavage system catalyzes the degradation of glycine. The H protein shuttles the methylamine group of glycine from the P protein to the T protein. This Prochlorococcus marinus (strain MIT 9313) protein is Glycine cleavage system H protein.